The primary structure comprises 78 residues: Small ribosomal subunit protein bS20 (78 aa).

Belongs to the bacterial ribosomal protein bS20 family.

In terms of biological role, binds directly to 16S ribosomal RNA. This Streptococcus thermophilus (strain ATCC BAA-491 / LMD-9) protein is Small ribosomal subunit protein bS20.